The sequence spans 175 residues: R-phycoerythrin subunit beta (175 aa).

Residue Cys-82 coordinates (2R,3E)-phycoerythrobilin.

Belongs to the phycobiliprotein family. Homodimer. Post-translationally, contains one covalently linked phycoerythrobilin chromophore.

Green-light absorbing phycoerythrin of unknown function. The sequence is that of R-phycoerythrin subunit beta (cpeB) from Prochlorococcus marinus subsp. pastoris (strain CCMP1986 / NIES-2087 / MED4).